Consider the following 127-residue polypeptide: Anti-adapter protein IraD (127 aa).

This sequence belongs to the GpW/Gp25 family. IraD subfamily. As to quaternary structure, interacts with RssB.

The protein localises to the cytoplasm. Functionally, inhibits RpoS proteolysis by regulating RssB activity, thereby increasing the stability of the sigma stress factor RpoS during oxidative stress. Its effect on RpoS stability is due to its interaction with RssB, which probably blocks the interaction of RssB with RpoS, and the consequent delivery of the RssB-RpoS complex to the ClpXP protein degradation pathway. This is Anti-adapter protein IraD from Escherichia coli (strain SMS-3-5 / SECEC).